The primary structure comprises 554 residues: 3-(3-hydroxy-phenyl)propionate/3-hydroxycinnamic acid hydroxylase (554 aa).

FAD contacts are provided by residues 17-46 (QVAI…VVEK) and 285-295 (FRIDRVLLAGD).

This sequence belongs to the PheA/TfdB FAD monooxygenase family. FAD serves as cofactor.

The catalysed reaction is 3-(3-hydroxyphenyl)propanoate + NADH + O2 + H(+) = 3-(2,3-dihydroxyphenyl)propanoate + NAD(+) + H2O. It catalyses the reaction (2E)-3-(3-hydroxyphenyl)prop-2-enoate + NADH + O2 + H(+) = (2E)-3-(2,3-dihydroxyphenyl)prop-2-enoate + NAD(+) + H2O. It functions in the pathway aromatic compound metabolism; 3-phenylpropanoate degradation. Catalyzes the insertion of one atom of molecular oxygen into position 2 of the phenyl ring of 3-(3-hydroxyphenyl)propionate (3-HPP) and hydroxycinnamic acid (3HCI). This Shigella sonnei (strain Ss046) protein is 3-(3-hydroxy-phenyl)propionate/3-hydroxycinnamic acid hydroxylase.